A 165-amino-acid polypeptide reads, in one-letter code: Glutamyl-tRNA(Gln) amidotransferase subunit F, mitochondrial (165 aa).

The span at 137-153 shows a compositional bias: basic and acidic residues; it reads VSDQRGERGFDTSELRT. Residues 137 to 165 form a disordered region; it reads VSDQRGERGFDTSELRTRINRAKSTAEKE.

The protein belongs to the GatF family. As to quaternary structure, subunit of the heterotrimeric GatFAB amidotransferase (AdT) complex, composed of A, B and F subunits.

Its subcellular location is the mitochondrion inner membrane. The enzyme catalyses L-glutamyl-tRNA(Gln) + L-glutamine + ATP + H2O = L-glutaminyl-tRNA(Gln) + L-glutamate + ADP + phosphate + H(+). In terms of biological role, allows the formation of correctly charged Gln-tRNA(Gln) through the transamidation of misacylated Glu-tRNA(Gln) in the mitochondria. The reaction takes place in the presence of glutamine and ATP through an activated gamma-phospho-Glu-tRNA(Gln). Required for proper protein synthesis within the mitochondrion. The polypeptide is Glutamyl-tRNA(Gln) amidotransferase subunit F, mitochondrial (Clavispora lusitaniae (strain ATCC 42720) (Yeast)).